We begin with the raw amino-acid sequence, 499 residues long: Ribose import ATP-binding protein RbsA (499 aa).

2 consecutive ABC transporter domains span residues 3 to 240 and 250 to 494; these read VEMS…VGRE and LEPG…TGGD. Residue 35-42 participates in ATP binding; sequence GENGAGKS.

It belongs to the ABC transporter superfamily. Ribose importer (TC 3.A.1.2.1) family. As to quaternary structure, the complex is composed of an ATP-binding protein (RbsA), two transmembrane proteins (RbsC) and a solute-binding protein (RbsB).

The protein localises to the cell membrane. The enzyme catalyses D-ribose(out) + ATP + H2O = D-ribose(in) + ADP + phosphate + H(+). Its function is as follows. Part of the ABC transporter complex RbsABC involved in ribose import. Responsible for energy coupling to the transport system. This Shouchella clausii (strain KSM-K16) (Alkalihalobacillus clausii) protein is Ribose import ATP-binding protein RbsA.